A 197-amino-acid chain; its full sequence is Histidine biosynthesis bifunctional protein HisIE (197 aa).

The tract at residues Met1 to Phe108 is phosphoribosyl-AMP cyclohydrolase. The phosphoribosyl-ATP pyrophosphohydrolase stretch occupies residues Trp109–Lys197.

In the N-terminal section; belongs to the PRA-CH family. This sequence in the C-terminal section; belongs to the PRA-PH family.

The protein resides in the cytoplasm. The catalysed reaction is 1-(5-phospho-beta-D-ribosyl)-ATP + H2O = 1-(5-phospho-beta-D-ribosyl)-5'-AMP + diphosphate + H(+). The enzyme catalyses 1-(5-phospho-beta-D-ribosyl)-5'-AMP + H2O = 1-(5-phospho-beta-D-ribosyl)-5-[(5-phospho-beta-D-ribosylamino)methylideneamino]imidazole-4-carboxamide. Its pathway is amino-acid biosynthesis; L-histidine biosynthesis; L-histidine from 5-phospho-alpha-D-ribose 1-diphosphate: step 2/9. The protein operates within amino-acid biosynthesis; L-histidine biosynthesis; L-histidine from 5-phospho-alpha-D-ribose 1-diphosphate: step 3/9. This chain is Histidine biosynthesis bifunctional protein HisIE (hisI), found in Thermotoga maritima (strain ATCC 43589 / DSM 3109 / JCM 10099 / NBRC 100826 / MSB8).